A 344-amino-acid polypeptide reads, in one-letter code: Sorting nexin-16 (344 aa).

Positions 1-10 (MATPYVPVPM) are enriched in pro residues. Disordered stretches follow at residues 1-66 (MATP…NTSS) and 81-107 (ASSI…EDRP). The span at 14–26 (NSASSFTTNRNQR) shows a compositional bias: polar residues. A compositionally biased stretch (low complexity) spans 27 to 40 (SSSFGSVSTSSNSS). Over residues 41-66 (KGQLEDSNMGNFKQTSVPDQMDNTSS) the composition is skewed to polar residues. The PX domain maps to 105–218 (DRPSTPTILG…EFLCLDDPPG (114 aa)). A 1,2-diacyl-sn-glycero-3-phospho-(1D-myo-inositol-3-phosphate) contacts are provided by Arg-144, Thr-146, and Arg-184. The residue at position 222 (Ser-222) is a Phosphoserine. Residues 223–278 (LEESRAFCETLEETNYRLQKELLEKQKEMESLKKLLSEKQLHIDTLENRIRTLSLE) adopt a coiled-coil conformation.

The protein belongs to the sorting nexin family. In terms of assembly, homooligomer. Interacts with EGFR. Detected in placenta, lung, liver,heart and pancreas.

It is found in the early endosome membrane. Its subcellular location is the late endosome membrane. It localises to the cytoplasm. The protein localises to the lysosome. Its function is as follows. May be involved in several stages of intracellular trafficking. Plays a role in protein transport from early to late endosomes. Plays a role in protein transport to the lysosome. Promotes degradation of EGFR after EGF signaling. Plays a role in intracellular transport of vesicular stomatitis virus nucleocapsids from the endosome to the cytoplasm. This is Sorting nexin-16 (SNX16) from Homo sapiens (Human).